The chain runs to 351 residues: Outer membrane protein A (351 aa).

The signal sequence occupies residues methionine 1 to alanine 21. A run of 8 beta stranded transmembrane segments spans residues threonine 27 to serine 37, glutamine 55 to valine 66, valine 70 to tryptophan 78, glutamine 96 to proline 107, leucine 112 to glycine 120, proline 147 to alanine 156, isoleucine 161 to glutamine 168, and leucine 187 to arginine 195. Tandem repeats lie at residues alanine 206–proline 207, alanine 208–proline 209, alanine 210–proline 211, and alanine 212–proline 213. The tract at residues alanine 206–proline 213 is 4 X 2 AA tandem repeats of A-P. The OmpA-like domain maps to valine 215 to lysine 343. The cysteines at positions 316 and 328 are disulfide-linked.

This sequence belongs to the outer membrane OOP (TC 1.B.6) superfamily. OmpA family. In terms of assembly, monomer and homodimer.

The protein localises to the cell outer membrane. With TolR probably plays a role in maintaining the position of the peptidoglycan cell wall in the periplasm. Acts as a porin with low permeability that allows slow penetration of small solutes; an internal gate slows down solute passage. In terms of biological role, required for conjugation with F-type plasmids; probably serves as the mating receptor on recipient cells. This chain is Outer membrane protein A, found in Escherichia fergusonii (strain ATCC 35469 / DSM 13698 / CCUG 18766 / IAM 14443 / JCM 21226 / LMG 7866 / NBRC 102419 / NCTC 12128 / CDC 0568-73).